The primary structure comprises 116 residues: Putative pterin-4-alpha-carbinolamine dehydratase (116 aa).

This sequence belongs to the pterin-4-alpha-carbinolamine dehydratase family.

It catalyses the reaction (4aS,6R)-4a-hydroxy-L-erythro-5,6,7,8-tetrahydrobiopterin = (6R)-L-erythro-6,7-dihydrobiopterin + H2O. In Xylella fastidiosa (strain 9a5c), this protein is Putative pterin-4-alpha-carbinolamine dehydratase.